The primary structure comprises 307 residues: Fe-S cluster assembly protein dre2 (307 aa).

2 disordered regions span residues 1-26 (MTPV…PSTS) and 159-179 (KKKK…VGFV). Positions 15–26 (AAPPTKTAPSTS) are enriched in low complexity. The N-terminal SAM-like domain stretch occupies residues 23-152 (PSTSTRTLLL…EKPAYQEAAV (130 aa)). The segment at 153–197 (PLRLGGKKKKAPAPTEQPPVATGVGFVDGNDELIDEDDLLSDDDL) is linker. Residues Cys-207, Cys-219, Cys-222, and Cys-224 each coordinate [2Fe-2S] cluster. The segment at 207 to 224 (CQPEKAKKRRRPCKDCTC) is fe-S binding site A. 4 residues coordinate [4Fe-4S] cluster: Cys-270, Cys-273, Cys-281, and Cys-284. Short sequence motifs (cx2C motif) lie at residues 270 to 273 (CNSC) and 281 to 284 (CSSC). Positions 270 to 284 (CNSCSLGDAFRCSSC) are fe-S binding site B.

The protein belongs to the anamorsin family. In terms of assembly, monomer. Interacts with tah18. Interacts with mia40. Requires [2Fe-2S] cluster as cofactor. The cofactor is [4Fe-4S] cluster.

The protein localises to the cytoplasm. It is found in the mitochondrion intermembrane space. Functionally, component of the cytosolic iron-sulfur (Fe-S) protein assembly (CIA) machinery required for the maturation of extramitochondrial Fe-S proteins. Part of an electron transfer chain functioning in an early step of cytosolic Fe-S biogenesis, facilitating the de novo assembly of a [4Fe-4S] cluster on the scaffold complex cfd1-nbp35. Electrons are transferred to dre2 from NADPH via the FAD- and FMN-containing protein tah18. Tah18-dre2 are also required for the assembly of the diferric tyrosyl radical cofactor of ribonucleotide reductase (RNR), probably by providing electrons for reduction during radical cofactor maturation in the catalytic small subunit rnr2. This chain is Fe-S cluster assembly protein dre2, found in Aspergillus terreus (strain NIH 2624 / FGSC A1156).